A 251-amino-acid chain; its full sequence is MSTFPKRILLKLSGETLIGNQGFGIQQQACLQITKSIQQIQQLGIQLGIVIGGGNIFRGINLKANGMPRVPADHMGMLATLLNGIALQQALISLEVKTCVMSALDCPKVAESYQWSKALQYLEEGVVVIFVGGTGNPYFTTDTAAALRASEIQANLLLKATKVDGIYNQDPLKNTQAVKYDRISYSQVLAEKLQVMDATAIALCRNHQIPIFVFNMKRLFENRLDHVLTDYSHGTLVDDGEIGHEANKLDR.

11-14 (KLSG) contacts ATP. Residues 19 to 24 (GNQGFG) form an involved in allosteric activation by GTP region. Glycine 53 is a UMP binding site. ATP is bound by residues glycine 54 and arginine 58. UMP is bound by residues aspartate 73 and 134–141 (TGNPYFTT). 3 residues coordinate ATP: threonine 161, tyrosine 167, and aspartate 170.

This sequence belongs to the UMP kinase family. As to quaternary structure, homohexamer.

The protein resides in the cytoplasm. It carries out the reaction UMP + ATP = UDP + ADP. It participates in pyrimidine metabolism; CTP biosynthesis via de novo pathway; UDP from UMP (UMPK route): step 1/1. With respect to regulation, allosterically activated by GTP. Inhibited by UTP. Catalyzes the reversible phosphorylation of UMP to UDP. This chain is Uridylate kinase, found in Protochlamydia amoebophila (strain UWE25).